Here is an 827-residue protein sequence, read N- to C-terminus: Periplasmic nitrate reductase (827 aa).

Residues 1–32 (MNLSRRDFMKANAALAAASVAGLIIPVKNVNA) constitute a signal peptide (tat-type signal). The 57-residue stretch at 37-93 (ITWDKAVCRFCGTGCAVLVGTKDGRVVASQGDPDAEVNRGLNCIKGYFLPKIMYGKD) folds into the 4Fe-4S Mo/W bis-MGD-type domain. The [4Fe-4S] cluster site is built by Cys-44, Cys-47, Cys-51, and Cys-79. Mo-bis(molybdopterin guanine dinucleotide)-binding positions include Lys-81, Gln-148, Asn-173, Cys-177, 210 to 217 (WGSNMAEM), 242 to 246 (STFEH), 261 to 263 (QSD), Met-372, Gln-376, Asn-482, 508 to 509 (SD), Lys-531, Asp-558, and 717 to 726 (TGRILEHWHT). Residue Phe-793 coordinates substrate. Residues Asn-801 and Lys-818 each coordinate Mo-bis(molybdopterin guanine dinucleotide).

The protein belongs to the prokaryotic molybdopterin-containing oxidoreductase family. NasA/NapA/NarB subfamily. Component of the periplasmic nitrate reductase NapAB complex composed of NapA and NapB. The cofactor is [4Fe-4S] cluster. Requires Mo-bis(molybdopterin guanine dinucleotide) as cofactor. Post-translationally, predicted to be exported by the Tat system. The position of the signal peptide cleavage has not been experimentally proven.

The protein resides in the periplasm. The catalysed reaction is 2 Fe(II)-[cytochrome] + nitrate + 2 H(+) = 2 Fe(III)-[cytochrome] + nitrite + H2O. In terms of biological role, catalytic subunit of the periplasmic nitrate reductase complex NapAB. Receives electrons from NapB and catalyzes the reduction of nitrate to nitrite. This Histophilus somni (strain 2336) (Haemophilus somnus) protein is Periplasmic nitrate reductase.